The sequence spans 460 residues: NADH-ubiquinone oxidoreductase chain 4 (460 aa).

13 helical membrane passes run 20–42 (AKWL…LSWL), 61–81 (PLST…VLAS), 94–113 (RTYI…AFGA), 117–139 (IMFY…RWGN), 148–168 (TYFL…LLLL), 195–215 (LWWA…GVHL), 225–245 (PIAG…YGMM), 258–278 (LAYP…SICL), 285–304 (SLIA…GILI), 308–330 (WGFT…LFCL), 351–371 (MILP…LALP), 394–414 (LLLT…LFLM), and 436–456 (LLIT…ELMW).

The protein belongs to the complex I subunit 4 family.

It is found in the mitochondrion membrane. It carries out the reaction a ubiquinone + NADH + 5 H(+)(in) = a ubiquinol + NAD(+) + 4 H(+)(out). Core subunit of the mitochondrial membrane respiratory chain NADH dehydrogenase (Complex I) that is believed to belong to the minimal assembly required for catalysis. Complex I functions in the transfer of electrons from NADH to the respiratory chain. The immediate electron acceptor for the enzyme is believed to be ubiquinone. The protein is NADH-ubiquinone oxidoreductase chain 4 (MT-ND4) of Salmo salar (Atlantic salmon).